Reading from the N-terminus, the 1052-residue chain is RIMS-binding protein 2 (1052 aa).

The segment at 115–164 (GEYIRPLPQPGDRPEPLSAKPTFLSRSGSARCRSESDMENERNSNTSKQR) is disordered. Residues 146 to 156 (CRSESDMENER) are compositionally biased toward basic and acidic residues. The region spanning 167–234 (GKVHLCVARY…PSNFVDFVQD (68 aa)) is the SH3 1 domain. Fibronectin type-III domains follow at residues 297-390 (VPYP…GKDV), 393-475 (APSH…KKEA), and 489-590 (PPQD…VPPT). 5 disordered regions span residues 584 to 615 (ELLV…DEHL), 629 to 666 (RAPG…PVST), 697 to 716 (SAGQ…PDFK), 767 to 787 (EMQL…NALK), and 805 to 829 (FPRG…YGRD). Pro residues predominate over residues 585–598 (LLVPPTPHPRPAPQ). Over residues 645-654 (PGRRSPSPSR) the composition is skewed to low complexity. Phosphoserine is present on residues Ser-704 and Ser-712. Phosphoserine is present on residues Ser-832 and Ser-839. Thr-841 bears the Phosphothreonine mark. 2 consecutive SH3 domains span residues 848–916 (LPAR…EIQA) and 952–1019 (VSTR…EVPD). The tract at residues 1029-1052 (PSHYSQDTPMRSKAKRKKSVHFTP) is disordered. Over residues 1040-1052 (SKAKRKKSVHFTP) the composition is skewed to basic residues.

The protein belongs to the RIMBP family. In terms of assembly, interacts with RIMS1, RIMS2, CACNA1D and CACNA1B, and potentially with other Ca(2+) channel alpha-1 isoforms.

It is found in the cell membrane. Its subcellular location is the synapse. Plays a role in the synaptic transmission as bifunctional linker that interacts simultaneously with RIMS1, RIMS2, CACNA1D and CACNA1B. This chain is RIMS-binding protein 2 (RIMBP2), found in Homo sapiens (Human).